The following is a 236-amino-acid chain: UPF0257 lipoprotein YnfC (236 aa).

An N-terminal signal peptide occupies residues 1–16; that stretch reads MKKPLLLTLLCMILAG. The N-palmitoyl cysteine moiety is linked to residue C17. C17 carries the S-diacylglycerol cysteine lipid modification.

It belongs to the UPF0257 family.

Its subcellular location is the cell membrane. The chain is UPF0257 lipoprotein YnfC from Salmonella paratyphi C (strain RKS4594).